The sequence spans 229 residues: Cytochrome c oxidase subunit 2 (229 aa).

Residues 1-26 (MSTWANLGLQDSASPLMEQLIFFHDH) lie on the Mitochondrial intermembrane side of the membrane. Residues 27 to 48 (ALLILVMITVLVGYLMVMLFFN) traverse the membrane as a helical segment. Topologically, residues 49–62 (SYVNRFLLHGQLIE) are mitochondrial matrix. A helical membrane pass occupies residues 63-82 (MIWTILPAIILLFIAMPSLR). Over 83 to 229 (LLYLLDEINE…IKWISDKVNS (147 aa)) the chain is Mitochondrial intermembrane. Cu cation is bound by residues histidine 161, cysteine 196, glutamate 198, cysteine 200, histidine 204, and methionine 207. Glutamate 198 lines the Mg(2+) pocket.

This sequence belongs to the cytochrome c oxidase subunit 2 family. In terms of assembly, component of the cytochrome c oxidase (complex IV, CIV), a multisubunit enzyme composed of a catalytic core of 3 subunits and several supernumerary subunits. The complex exists as a monomer or a dimer and forms supercomplexes (SCs) in the inner mitochondrial membrane with ubiquinol-cytochrome c oxidoreductase (cytochrome b-c1 complex, complex III, CIII). It depends on Cu cation as a cofactor.

The protein localises to the mitochondrion inner membrane. The enzyme catalyses 4 Fe(II)-[cytochrome c] + O2 + 8 H(+)(in) = 4 Fe(III)-[cytochrome c] + 2 H2O + 4 H(+)(out). Functionally, component of the cytochrome c oxidase, the last enzyme in the mitochondrial electron transport chain which drives oxidative phosphorylation. The respiratory chain contains 3 multisubunit complexes succinate dehydrogenase (complex II, CII), ubiquinol-cytochrome c oxidoreductase (cytochrome b-c1 complex, complex III, CIII) and cytochrome c oxidase (complex IV, CIV), that cooperate to transfer electrons derived from NADH and succinate to molecular oxygen, creating an electrochemical gradient over the inner membrane that drives transmembrane transport and the ATP synthase. Cytochrome c oxidase is the component of the respiratory chain that catalyzes the reduction of oxygen to water. Electrons originating from reduced cytochrome c in the intermembrane space (IMS) are transferred via the dinuclear copper A center (CU(A)) of subunit 2 and heme A of subunit 1 to the active site in subunit 1, a binuclear center (BNC) formed by heme A3 and copper B (CU(B)). The BNC reduces molecular oxygen to 2 water molecules using 4 electrons from cytochrome c in the IMS and 4 protons from the mitochondrial matrix. This chain is Cytochrome c oxidase subunit 2 (mt:CoII), found in Drosophila subobscura (Fruit fly).